Consider the following 377-residue polypeptide: DNA primase small subunit PriS (377 aa).

Active-site residues include aspartate 99, aspartate 101, and aspartate 274.

It belongs to the eukaryotic-type primase small subunit family. Heterodimer of a small subunit (PriS) and a large subunit (PriL). Requires Mg(2+) as cofactor. Mn(2+) is required as a cofactor.

In terms of biological role, catalytic subunit of DNA primase, an RNA polymerase that catalyzes the synthesis of short RNA molecules used as primers for DNA polymerase during DNA replication. The small subunit contains the primase catalytic core and has DNA synthesis activity on its own. Binding to the large subunit stabilizes and modulates the activity, increasing the rate of DNA synthesis while decreasing the length of the DNA fragments, and conferring RNA synthesis capability. The DNA polymerase activity may enable DNA primase to also catalyze primer extension after primer synthesis. May also play a role in DNA repair. The sequence is that of DNA primase small subunit PriS from Staphylothermus marinus (strain ATCC 43588 / DSM 3639 / JCM 9404 / F1).